Reading from the N-terminus, the 315-residue chain is GTP cyclohydrolase MptA 1 (315 aa).

Belongs to the GTP cyclohydrolase IV family. In terms of assembly, homodimer. Requires Fe(2+) as cofactor.

The enzyme catalyses GTP + H2O = 7,8-dihydroneopterin 2',3'-cyclic phosphate + formate + diphosphate + H(+). It participates in cofactor biosynthesis; 5,6,7,8-tetrahydromethanopterin biosynthesis. Its function is as follows. Converts GTP to 7,8-dihydro-D-neopterin 2',3'-cyclic phosphate, the first intermediate in the biosynthesis of coenzyme methanopterin. The polypeptide is GTP cyclohydrolase MptA 1 (Methanocella arvoryzae (strain DSM 22066 / NBRC 105507 / MRE50)).